Here is a 301-residue protein sequence, read N- to C-terminus: Acetylglutamate kinase (301 aa).

Residues 70-71 (GG), Arg-92, and Asn-185 each bind substrate.

It belongs to the acetylglutamate kinase family. ArgB subfamily.

It is found in the cytoplasm. It carries out the reaction N-acetyl-L-glutamate + ATP = N-acetyl-L-glutamyl 5-phosphate + ADP. Its pathway is amino-acid biosynthesis; L-arginine biosynthesis; N(2)-acetyl-L-ornithine from L-glutamate: step 2/4. Catalyzes the ATP-dependent phosphorylation of N-acetyl-L-glutamate. In Synechococcus elongatus (strain ATCC 33912 / PCC 7942 / FACHB-805) (Anacystis nidulans R2), this protein is Acetylglutamate kinase.